A 197-amino-acid polypeptide reads, in one-letter code: RNA pyrophosphohydrolase (197 aa).

One can recognise a Nudix hydrolase domain in the interval 6–150; that stretch reads GYRPNVGIVI…KRDVYRKVMR (145 aa). Positions 38 to 59 match the Nudix box motif; sequence GGINEGENIETAMYRELYEEVG.

Belongs to the Nudix hydrolase family. RppH subfamily. It depends on a divalent metal cation as a cofactor.

Accelerates the degradation of transcripts by removing pyrophosphate from the 5'-end of triphosphorylated RNA, leading to a more labile monophosphorylated state that can stimulate subsequent ribonuclease cleavage. This is RNA pyrophosphohydrolase from Haemophilus ducreyi (strain 35000HP / ATCC 700724).